A 116-amino-acid chain; its full sequence is Mercuric transport protein MerT (116 aa).

The next 2 membrane-spanning stretches (helical) occupy residues 16–36 (LAAI…ALGF) and 46–66 (VLEP…FFAW). Hg(2+) contacts are provided by Cys-24 and Cys-25. Residues Cys-76 and Cys-82 each coordinate Hg(2+). The chain crosses the membrane as a helical span at residues 94-114 (IFWGVAVLVLVALGFPYVVPF).

It belongs to the MerT family.

Its subcellular location is the cell inner membrane. Involved in mercury resistance. Probably transfers a mercuric ion from the periplasmic Hg(2+)-binding protein MerP to the cytoplasmic mercuric reductase MerA. In Pseudomonas fluorescens, this protein is Mercuric transport protein MerT.